Consider the following 550-residue polypeptide: Hydroxylamine reductase (550 aa).

[2Fe-2S] cluster is bound by residues cysteine 3, cysteine 6, cysteine 18, and cysteine 25. The hybrid [4Fe-2O-2S] cluster site is built by histidine 249, glutamate 273, cysteine 317, cysteine 405, cysteine 433, cysteine 458, glutamate 492, and lysine 494. The residue at position 405 (cysteine 405) is a Cysteine persulfide.

Belongs to the HCP family. [2Fe-2S] cluster is required as a cofactor. Hybrid [4Fe-2O-2S] cluster serves as cofactor.

The protein localises to the cytoplasm. It catalyses the reaction A + NH4(+) + H2O = hydroxylamine + AH2 + H(+). In terms of biological role, catalyzes the reduction of hydroxylamine to form NH(3) and H(2)O. In Escherichia coli O139:H28 (strain E24377A / ETEC), this protein is Hydroxylamine reductase.